The primary structure comprises 1228 residues: MEEVIKNAHTYDVEDVLKFLDVNKDNGLKNEELDDRRLKYGLNELEVEKKKSIFELILNQFDDLLVKILLLAAFISFVLTLLDMKHKKIEICDFIEPLVIVLILILNAAVGVWQECNAEKSLEALKELQPTKAKVLRDGKWEIIDSKYLYVGDIIELSVGNKTPADARIIKIYSTSLKVEQSMLTGESCSVDKYAEKMEDSYKNCEIQLKKNILFSSTAIVCGRCIAVVINIGMKTEIGHIQHAVIESNSEDTQTPLQIKIDLFGQQLSKIIFVICVTVWIINFKHFSDPIHGSFLYGCLYYFKISVALAVAAIPEGLPAVITTCLALGTRRMVKKNAIVRKLQSVETLGCTTVICSDKTGTLTTNQMTTTVFHLFRESDSLTEYQLCQKGDTYYFYESSNLTNDIYAGESSFFNKLKDEGNVEALTDDGEEGSIDEADPYSDYFSSDSKKMKNDLNNNNNNNNNSSRSGAKRNIPLKEMKSNENTIISRGSKILEDKINKYCYSEYDYNFYMCLVNCNEANIFCNDNSQIVKKFGDSTELALLHFVHNFDILPTFSKNNKMPAEYEKNTTPVQSSNKKDKSPRGINKFFSSKNDNSHITSTLNENDKNLKNANHSNYTTAQATTNGYEAIGENTFEHGTSFENCFHSKLGNKINTTSTHNNNNNNNNNSNSVPSECISSWRNECKQIKIIEFTRERKLMSVIVENKKKEIILYCKGAPENIIKNCKYYLTKNDIRPLNETLKNEIHNKIQNMGKRALRTLSFAYKKLSSKDLNIKNTDDYYKLEQDLIYLGGLGIIDPPRKYVGRAIRLCHMAGIRVFMITGDNINTARAIAKEINILNKNEGDDEKDNYTNNKNTQICCYNGREFEDFSLEKQKHILKNTPRIVFCRTEPKHKKQIVKVLKDLGETVAMTGDGVNDAPALKSADIGIAMGINGTEVAKEASDIVLADDNFNTIVEAIKEGRCIYNNMKAFIRYLISSNIGEVASIFITALLGIPDSLAPVQLLWVNLVTDGLPATALGFNPPEHDVMKCKPRHKNDNLINGLTLLRYIIIGTYVGIATVSIFVYWFLFYPDSDMHTLINFYQLSHYNQCKAWNNFRVNKVYDMSEDHCSYFSAGKIKASTLSLSVLVLIEMFNALNALSEYNSLFEIPPWRNMYLVLATIGSLLLHVLILYIPPLARIFGVVPLSAYDWFLVFLWSFPVIILDEIIKFYAKRKLKEEQRTKKIKID.

Over M1–D63 the chain is Cytoplasmic. Residues L64–L81 traverse the membrane as a helical segment. Residues L82–C92 are Extracellular-facing. Residues D93–V112 form a helical membrane-spanning segment. Topologically, residues W113–K270 are cytoplasmic. Residues I271–I291 traverse the membrane as a helical segment. Residues H292–L300 lie on the Extracellular side of the membrane. A helical transmembrane segment spans residues Y301–V321. At I322 to R974 the chain is on the cytoplasmic side. The 4-aspartylphosphate intermediate role is filled by D358. Disordered regions lie at residues M452–K478 and M562–A613. The span at F589 to N604 shows a compositional bias: polar residues. Residue K716 participates in ATP binding. Residues Y975 to G994 form a helical membrane-spanning segment. Residues I995–A1000 lie on the Extracellular side of the membrane. The helical transmembrane segment at P1001 to F1021 threads the bilayer. At N1022–N1042 the chain is on the cytoplasmic side. The helical transmembrane segment at G1043–W1067 threads the bilayer. The Extracellular portion of the chain corresponds to F1068 to I1118. A helical membrane pass occupies residues K1119–L1140. Topologically, residues S1141 to P1151 are cytoplasmic. Residues W1152–L1172 traverse the membrane as a helical segment. Topologically, residues Y1173–P1185 are extracellular. The helical transmembrane segment at L1186 to E1206 threads the bilayer. The Cytoplasmic segment spans residues I1207–D1228.

Belongs to the cation transport ATPase (P-type) (TC 3.A.3) family.

Its subcellular location is the membrane. It catalyses the reaction Ca(2+)(in) + ATP + H2O = Ca(2+)(out) + ADP + phosphate + H(+). Its function is as follows. This magnesium-dependent enzyme catalyzes the hydrolysis of ATP coupled with the transport of the calcium. The chain is Calcium-transporting ATPase (ATP6) from Plasmodium falciparum (isolate K1 / Thailand).